Consider the following 432-residue polypeptide: D-amino acid dehydrogenase (432 aa).

3–17 lines the FAD pocket; it reads VVILGSGVVGVTSAW.

This sequence belongs to the DadA oxidoreductase family. The cofactor is FAD.

The catalysed reaction is a D-alpha-amino acid + A + H2O = a 2-oxocarboxylate + AH2 + NH4(+). Its pathway is amino-acid degradation; D-alanine degradation; NH(3) and pyruvate from D-alanine: step 1/1. Its function is as follows. Oxidative deamination of D-amino acids. The protein is D-amino acid dehydrogenase of Salmonella agona (strain SL483).